Consider the following 336-residue polypeptide: D-alanine--D-alanine ligase (336 aa).

Positions 124-330 (KMWFSALGIP…FATFLEQAIL (207 aa)) constitute an ATP-grasp domain. 154 to 209 (AFDEWGSVFIKAASQGSSVGCFPAHRREDIPGLVRKAFEYAPFVVVEKTIKARELE) is an ATP binding site. Positions 284, 297, and 299 each coordinate Mg(2+).

It belongs to the D-alanine--D-alanine ligase family. It depends on Mg(2+) as a cofactor. The cofactor is Mn(2+).

Its subcellular location is the cytoplasm. The catalysed reaction is 2 D-alanine + ATP = D-alanyl-D-alanine + ADP + phosphate + H(+). It participates in cell wall biogenesis; peptidoglycan biosynthesis. In terms of biological role, cell wall formation. The chain is D-alanine--D-alanine ligase from Shewanella amazonensis (strain ATCC BAA-1098 / SB2B).